The chain runs to 352 residues: MEWAAAATKAASWGMAVAAAAAADDAGPTMLSFAGPSSSSSSPDAAAAAAAAAAAALHDFSVRARPAAAAPATRRARGGSGGGGGGGGGAEACSVDGCRSDLSRCRDYHRRHKVCEAHAKTPVVVVAGQEQRFCQQCSRFHNLAEFDDGKKSCRKRLDGHNRRRRKPQHDALNPRSFLPYHQANQFSVYPQTFPIADQNADALMRPLDRHPPFSISFSGTFREPKQFPFMQDGGSGLGAARHDLLRPFSSPEDGANITTTRSACNGVPHGLDPECALSLLSSSLHPSPAAGISSATAPPQFAPSSFSRIAASSQAVTTAFASDGGSVAGDHVLVPAVTYEDPSQAMPFSWQV.

Positions Ala-68 to Gly-88 are disordered. The segment covering Gly-78–Gly-88 has biased composition (gly residues). Residues Ala-90–Pro-167 form an SBP-type zinc finger. Zn(2+)-binding residues include Cys-93, Cys-98, Cys-115, His-118, Cys-134, Cys-137, His-141, and Cys-153. The Bipartite nuclear localization signal signature appears at Lys-150 to Lys-166. The interval Ser-152–Pro-174 is disordered.

The protein resides in the nucleus. Its function is as follows. Trans-acting factor that binds specifically to the consensus nucleotide sequence 5'-TNCGTACAA-3'. The chain is Putative squamosa promoter-binding-like protein 19 (SPL19) from Oryza sativa subsp. japonica (Rice).